The sequence spans 160 residues: Small ribosomal subunit protein uS9 (160 aa).

The protein belongs to the universal ribosomal protein uS9 family.

The protein is Small ribosomal subunit protein uS9 of Bradyrhizobium sp. (strain ORS 278).